A 601-amino-acid polypeptide reads, in one-letter code: HIRA-interacting protein 3 (601 aa).

Disordered stretches follow at residues 60–469 (KMQA…EDHP) and 546–601 (STGR…GDSS). Basic and acidic residues predominate over residues 66 to 76 (GTREGKPDFIK). A phosphoserine mark is found at Ser85, Ser96, and Ser98. The span at 97 to 113 (ESESSSSPSSPDGSGPS) shows a compositional bias: low complexity. Over residues 117–129 (RTTKKTCLRRALK) the composition is skewed to basic residues. Residues 130 to 149 (KAVESTDEDHQTDLDAKMGL) show a composition bias toward basic and acidic residues. Ser134 carries the phosphoserine modification. Phosphothreonine occurs at positions 135 and 141. Phosphoserine is present on residues Ser152, Ser153, and Ser163. Position 167 is a phosphothreonine (Thr167). The segment covering 186 to 205 (GAKDKQVPLKADRKQVREES) has biased composition (basic and acidic residues). A phosphoserine mark is found at Ser205, Ser207, Ser208, Ser231, Ser234, Ser238, Ser313, Ser359, Ser360, Ser384, and Ser389. Composition is skewed to basic and acidic residues over residues 238-264 (SPAK…ERKS) and 313-324 (SSEKGEAEKEEG). Positions 347–378 (RTQTESGRRQNTSSRDDSNSTQEQAAAQGTTK) are enriched in polar residues. The segment covering 379–388 (SGSLGSSNGD) has biased composition (low complexity). Residue Thr391 is modified to Phosphothreonine. Phosphoserine is present on residues Ser396 and Ser398. A compositionally biased stretch (low complexity) spans 413 to 432 (SNKSSKNGQARSCSSSSDSS). The interaction with the histone H2A-H2B complex stretch occupies residues 429 to 572 (SDSSPEPTGQ…TSPGETYRRT (144 aa)). The span at 556-566 (WNPSGEGTSPG) shows a compositional bias: polar residues. Ser564, Ser575, Ser595, Ser596, and Ser600 each carry phosphoserine. Residues 568–580 (TYRRTLDSEEEQP) are compositionally biased toward basic and acidic residues.

In terms of assembly, interacts (via C-terminus) with histone H2A-H2B dimers; the interaction is direct. Interacts with HIRA. Interacts with CK2. In terms of processing, phosphorylated by CK2.

The protein localises to the nucleus. Functionally, histone chaperone that carries a H2A-H2B histone complex and facilitates its deposition onto chromatin. The chain is HIRA-interacting protein 3 from Mus musculus (Mouse).